We begin with the raw amino-acid sequence, 1888 residues long: Nuclear pore membrane glycoprotein 210-like (1888 aa).

The first 35 residues, 1-35, serve as a signal peptide directing secretion; that stretch reads MTGCPASSRRRGFGLFFFLRLHRLLLLFLVLRGTL. N84, N304, N348, N495, N522, N812, and N931 each carry an N-linked (GlcNAc...) asparagine glycan. The BIG2 domain maps to 1082–1154; sequence FPPFRLLPEK…TIQTVNEDTG (73 aa). An N-linked (GlcNAc...) asparagine glycan is attached at N1445. Residues 1813–1833 form a helical membrane-spanning segment; that stretch reads ILLLTLFAVLASTASIFLAYN. N1859 carries an N-linked (GlcNAc...) asparagine glycan.

Belongs to the NUP210 family.

Its subcellular location is the nucleus membrane. The chain is Nuclear pore membrane glycoprotein 210-like (NUP210L) from Homo sapiens (Human).